Reading from the N-terminus, the 752-residue chain is DNA helicase/primase complex-associated protein (752 aa).

It belongs to the herpesviridae HEPA family. As to quaternary structure, associates with the primase and the helicase to form the helicase-primase complex. Interacts with the origin-binding protein. Interacts with the polymerase catalytic subunit.

The protein resides in the host nucleus. Functionally, component of the helicase/primase complex. Unwinds the DNA at the replication forks and generates single-stranded DNA for both leading and lagging strand synthesis. The primase synthesizes short RNA primers on the lagging strand that the polymerase presumably elongates using dNTPs. The primase-associated factor has no known catalytic activity in the complex and may serve to facilitate the formation of the replisome by directly interacting with the origin-binding protein and the polymerase. The polypeptide is DNA helicase/primase complex-associated protein (Homo sapiens (Human)).